A 334-amino-acid chain; its full sequence is MNIRPDQNRLVFSADTLKIDEAAEADRIVAGLRAQLRSLRKRGLVLGLSGGIDSSVSVALAVRAVGAKNVFCLFMPENDSDPESLRLGRLVAETFGVEAVVEDIGPTLDAMGCYQRRDAFIRELVPDYGPGWASKIVIANALEGDGYNISSLVVQDPEGKQTKLRMPPSVYLGIVAATNMKQRTRKQIEYYHADRLNFAVLGTPNRLEYDQGFFVKNGDGAADVKPIAHLYKSQVYALAGHLGIPEEIRRRPPTTDTYSLEQTQEEFYFSLPYDRMDLCLFGLNNGLSADEVGRAANLGVAQVKRVWADIAAKRKATRYLHLGPQLVQPVEEIE.

An ATP-binding site is contributed by glycine 47–serine 54. Position 53 (aspartate 53) interacts with Mg(2+). Arginine 183 provides a ligand contact to deamido-NAD(+). Threonine 203 provides a ligand contact to ATP. Glutamate 208 serves as a coordination point for Mg(2+). Positions 216 and 223 each coordinate deamido-NAD(+). ATP is bound by residues lysine 232 and threonine 254.

It belongs to the NAD synthetase family. As to quaternary structure, homodimer.

It catalyses the reaction deamido-NAD(+) + NH4(+) + ATP = AMP + diphosphate + NAD(+) + H(+). It participates in cofactor biosynthesis; NAD(+) biosynthesis; NAD(+) from deamido-NAD(+) (ammonia route): step 1/1. Functionally, catalyzes the ATP-dependent amidation of deamido-NAD to form NAD. Uses ammonia as a nitrogen source. This Rhizobium meliloti (strain 1021) (Ensifer meliloti) protein is NH(3)-dependent NAD(+) synthetase.